The following is a 337-amino-acid chain: MASAFSAFRVSLSRISPFRDTRFSYPATLALAHTKRIMCNSSHSVSPSPSPSDFSSSSSSSSSSPSTFSLMETSENARWRPMCLYYTHGKCTKMDDPAHLEIFNHDCSKELRVAAADLERKKSQEFNFFLVIDLEGKVEILEFPILIVDAKTMEVVDLFHRFVRPTKMSEQAINKYIEGKYGELGVDRVWHDTAIPFKQVVEEFEVWLAEHDLWDKDTDWGLNDAAFVTCGNWDIKTKIPEQCVVSNINLPPYFMEWINLKDVYLNFYGREARGMVSMMRQCGIKLMGSHHLGIDDTKNITRVVQRMLSEGAVLKLTARRSKSNMRNVEFLFKNRIK.

Residues 42–66 (SHSVSPSPSPSDFSSSSSSSSSSPS) show a composition bias toward low complexity. Positions 42 to 68 (SHSVSPSPSPSDFSSSSSSSSSSPSTF) are disordered. The Exonuclease domain occupies 129–304 (FLVIDLEGKV…DDTKNITRVV (176 aa)). Mg(2+) contacts are provided by Asp-133, Glu-135, and Asp-234. Glu-135 functions as the Proton acceptor in the catalytic mechanism. Residue Glu-135 participates in AMP binding. The active-site Proton acceptor is the His-291. An AMP-binding site is contributed by His-291. Residue Asp-296 participates in Mg(2+) binding.

This is an uncharacterized protein from Arabidopsis thaliana (Mouse-ear cress).